The chain runs to 417 residues: Putative transporter AmpG 1 (417 aa).

The next 12 helical transmembrane spans lie at 7 to 27 (LCII…TGNT), 42 to 62 (IGIL…APIF), 78 to 98 (LSWI…FSFL), 104 to 124 (LLLF…QDTI), 143 to 163 (GIYI…AIYL), 171 to 191 (EIYK…IVGI), 225 to 245 (ALKP…LVLY), 273 to 293 (VGKF…GVIM), 301 to 321 (SIFL…FLEI), 328 to 348 (LLFI…TAYI), 366 to 386 (FLSS…GYMV), and 389 to 409 (FGWQ…LLIL).

It belongs to the major facilitator superfamily.

The protein resides in the cell inner membrane. The protein is Putative transporter AmpG 1 (ampG1) of Rickettsia conorii (strain ATCC VR-613 / Malish 7).